We begin with the raw amino-acid sequence, 340 residues long: Anthranilate phosphoribosyltransferase (340 aa).

5-phospho-alpha-D-ribose 1-diphosphate is bound by residues Gly79, 82 to 83, Ser87, 89 to 92, 107 to 115, and Ser119; these read GD, NIST, and KHGNRSVSS. Gly79 is an anthranilate binding site. Mg(2+) is bound at residue Ser91. Position 110 (Asn110) interacts with anthranilate. Arg165 contributes to the anthranilate binding site. 2 residues coordinate Mg(2+): Asp224 and Glu225.

The protein belongs to the anthranilate phosphoribosyltransferase family. As to quaternary structure, homodimer. Requires Mg(2+) as cofactor.

The catalysed reaction is N-(5-phospho-beta-D-ribosyl)anthranilate + diphosphate = 5-phospho-alpha-D-ribose 1-diphosphate + anthranilate. It functions in the pathway amino-acid biosynthesis; L-tryptophan biosynthesis; L-tryptophan from chorismate: step 2/5. Catalyzes the transfer of the phosphoribosyl group of 5-phosphorylribose-1-pyrophosphate (PRPP) to anthranilate to yield N-(5'-phosphoribosyl)-anthranilate (PRA). This chain is Anthranilate phosphoribosyltransferase, found in Oceanobacillus iheyensis (strain DSM 14371 / CIP 107618 / JCM 11309 / KCTC 3954 / HTE831).